Consider the following 174-residue polypeptide: NAD(P)H-quinone oxidoreductase subunit J (174 aa).

This sequence belongs to the complex I 30 kDa subunit family. As to quaternary structure, NDH-1 can be composed of about 15 different subunits; different subcomplexes with different compositions have been identified which probably have different functions.

It localises to the cellular thylakoid membrane. The enzyme catalyses a plastoquinone + NADH + (n+1) H(+)(in) = a plastoquinol + NAD(+) + n H(+)(out). It carries out the reaction a plastoquinone + NADPH + (n+1) H(+)(in) = a plastoquinol + NADP(+) + n H(+)(out). In terms of biological role, NDH-1 shuttles electrons from an unknown electron donor, via FMN and iron-sulfur (Fe-S) centers, to quinones in the respiratory and/or the photosynthetic chain. The immediate electron acceptor for the enzyme in this species is believed to be plastoquinone. Couples the redox reaction to proton translocation, and thus conserves the redox energy in a proton gradient. Cyanobacterial NDH-1 also plays a role in inorganic carbon-concentration. This chain is NAD(P)H-quinone oxidoreductase subunit J, found in Picosynechococcus sp. (strain ATCC 27264 / PCC 7002 / PR-6) (Agmenellum quadruplicatum).